We begin with the raw amino-acid sequence, 242 residues long: ATP synthase subunit a (242 aa).

Transmembrane regions (helical) follow at residues Ser-29 to Ser-49, Phe-84 to Ile-104, Ile-114 to Val-134, Phe-140 to Ile-160, Val-189 to Met-209, and Val-210 to Leu-230.

Belongs to the ATPase A chain family. In terms of assembly, F-type ATPases have 2 components, CF(1) - the catalytic core - and CF(0) - the membrane proton channel. CF(1) has five subunits: alpha(3), beta(3), gamma(1), delta(1), epsilon(1). CF(0) has three main subunits: a(1), b(2) and c(9-12). The alpha and beta chains form an alternating ring which encloses part of the gamma chain. CF(1) is attached to CF(0) by a central stalk formed by the gamma and epsilon chains, while a peripheral stalk is formed by the delta and b chains.

Its subcellular location is the cell inner membrane. Functionally, key component of the proton channel; it plays a direct role in the translocation of protons across the membrane. The chain is ATP synthase subunit a from Rickettsia bellii (strain RML369-C).